Consider the following 314-residue polypeptide: Transmembrane protein 248 (314 aa).

The chain crosses the membrane as a helical span at residues 21–41 (VVFMISVSAMAIAFLTLGYFF). Residues 78-106 (LTNDTTTPESTMTSGQARASTQSPQALED) form a disordered region. Positions 80–102 (NDTTTPESTMTSGQARASTQSPQ) are enriched in polar residues. Helical transmembrane passes span 179–199 (QVVF…PVTV), 236–258 (FWCY…TVIV), and 270–290 (LMHT…YAVI).

Belongs to the TMEM248 family.

It is found in the membrane. This is Transmembrane protein 248 (TMEM248) from Homo sapiens (Human).